We begin with the raw amino-acid sequence, 214 residues long: Pyridoxine/pyridoxamine 5'-phosphate oxidase (214 aa).

Substrate contacts are provided by residues 11–14 (RREY) and K68. Residues 63-68 (RLVLLK), 78-79 (FT), R84, K85, and Q107 each bind FMN. Substrate-binding residues include Y125 and R129. Residues 142-143 (QS) and W187 contribute to the FMN site. Residue 193-195 (RLH) coordinates substrate. FMN is bound at residue R197.

This sequence belongs to the pyridoxamine 5'-phosphate oxidase family. As to quaternary structure, homodimer. FMN is required as a cofactor.

It carries out the reaction pyridoxamine 5'-phosphate + O2 + H2O = pyridoxal 5'-phosphate + H2O2 + NH4(+). The enzyme catalyses pyridoxine 5'-phosphate + O2 = pyridoxal 5'-phosphate + H2O2. The protein operates within cofactor metabolism; pyridoxal 5'-phosphate salvage; pyridoxal 5'-phosphate from pyridoxamine 5'-phosphate: step 1/1. It functions in the pathway cofactor metabolism; pyridoxal 5'-phosphate salvage; pyridoxal 5'-phosphate from pyridoxine 5'-phosphate: step 1/1. Catalyzes the oxidation of either pyridoxine 5'-phosphate (PNP) or pyridoxamine 5'-phosphate (PMP) into pyridoxal 5'-phosphate (PLP). This chain is Pyridoxine/pyridoxamine 5'-phosphate oxidase, found in Blochmanniella floridana.